A 1077-amino-acid chain; its full sequence is Zinc finger protein 518B (1077 aa).

The segment covering 9-30 (YTTQVNGGPSSLTMSPKQPNRA) has biased composition (polar residues). Residues 9–35 (YTTQVNGGPSSLTMSPKQPNRATRTER) are disordered. 2 C2H2-type zinc fingers span residues 160 to 182 (FICSHCSYISYTKGEFQRHLVKH) and 188 to 211 (YRCEYCDYGAIRNDYIVKHRRRVH). The disordered stretch occupies residues 372–397 (TSRGDGGTSECLSTEKGSGGQKKMLS). K479 is covalently cross-linked (Glycyl lysine isopeptide (Lys-Gly) (interchain with G-Cter in SUMO2)). Disordered regions lie at residues 561 to 585 (LVSSDRKLEDKQMESKAVGNTGQVS), 599 to 622 (GEDKPRSQQPGDQPGQPKTSETAG), 675 to 739 (KPSS…GSRQ), and 825 to 852 (QPLTCRSGPADMSPGLETSLRPKSRKED). A compositionally biased stretch (basic and acidic residues) spans 564-574 (SDRKLEDKQME). Composition is skewed to polar residues over residues 605-621 (SQQPGDQPGQPKTSETA) and 675-688 (KPSSLSANSAQRRS). Residues K847 and K861 each participate in a glycyl lysine isopeptide (Lys-Gly) (interchain with G-Cter in SUMO2) cross-link. Positions 895 to 914 (QVNSTKKKNKMQANPGRYFK) are disordered. A C2H2-type 3 zinc finger spans residues 1039–1061 (FKCWFCGRLYEDQEEWMSHGQRH).

It belongs to the krueppel C2H2-type zinc-finger protein family.

Its subcellular location is the nucleus. Functionally, through its association with the EHMT1-EHMT2/G9A and PRC2/EED-EZH2 histone methyltransferase complexes may function in gene silencing, regulating repressive post-translational methylation of histone tails at promoters of target genes. The sequence is that of Zinc finger protein 518B (Znf518b) from Mus musculus (Mouse).